A 659-amino-acid polypeptide reads, in one-letter code: Mitochondrial Rho GTPase 1 (659 aa).

The Cytoplasmic portion of the chain corresponds to 1–631 (MTKTRIRIVV…LTNDIDYRQT (631 aa)). One can recognise a Miro 1 domain in the interval 3 to 183 (KTRIRIVVCG…FYLCQRTITN (181 aa)). GTP contacts are provided by residues 12–19 (GDSGVGKT), 61–63 (DTG), and 115–118 (NKCD). EF-hand domains lie at 199–234 (LGVL…CFSK) and 328–363 (LGYR…TPGL). Asp212, Asp214, Asp216, Glu223, Asp341, Asp343, Asp345, and Glu352 together coordinate Ca(2+). The Miro 2 domain maps to 444–609 (RKVLNCYMLG…FIKLTEVALE (166 aa)). GTP is bound by residues 453–460 (GKGNSGKS), 489–493 (ELKGG), and 558–561 (LKAD). Residues 632 to 652 (IVAISSVVGFASLFTFTALKI) traverse the membrane as a helical; Anchor for type IV membrane protein segment. At 653 to 659 (YSSFKNT) the chain is on the mitochondrial intermembrane side.

This sequence belongs to the mitochondrial Rho GTPase family.

It is found in the mitochondrion outer membrane. Its function is as follows. Mitochondrial GTPase involved in mitochondrial trafficking. Probably involved in control of anterograde transport of mitochondria and their subcellular distribution. The sequence is that of Mitochondrial Rho GTPase 1 (GEM1) from Kluyveromyces lactis (strain ATCC 8585 / CBS 2359 / DSM 70799 / NBRC 1267 / NRRL Y-1140 / WM37) (Yeast).